The sequence spans 1015 residues: DNA ligase 3 (1015 aa).

The PARP-type zinc-finger motif lies at 94–186; sequence FCVDYAKRGT…QISQHIADLS (93 aa). C106, C109, H140, and C143 together coordinate Zn(2+). A phosphoserine mark is found at S211, S217, S228, and S244. The interval 229 to 255 is disordered; the sequence is GFSAAKPNNSEQAPSSPAPGTSLSASK. Over residues 234 to 253 the composition is skewed to polar residues; the sequence is KPNNSEQAPSSPAPGTSLSA. Interaction with DNA stretches follow at residues 279–282, 323–328, 393–396, and 426–432; these read PSYN, VYNLND, TKED, and KMNSGAK. ATP is bound at residue E511. Residue K513 is the N6-AMP-lysine intermediate of the active site. ATP is bound by residues R518 and R533. Mg(2+) is bound by residues E565 and E660. ATP contacts are provided by K665, R676, and K680. Residues 849-926 form a disordered region; sequence DEASPTTGGS…KSSPVKVGMK (78 aa). The span at 854-884 shows a compositional bias: low complexity; the sequence is TTGGSSGENEGTAGSAGPCKGPPSKSSASAK. At S919 the chain carries Phosphoserine. In terms of domain architecture, BRCT spans 939–1015; it reads VLLDVFTGVR…IRKRRLIAPC (77 aa).

This sequence belongs to the ATP-dependent DNA ligase family. In terms of assembly, isoform 3 interacts (via BRCT domain) with the nuclear DNA-repair protein XRCC1. Interacts with POLG. Interacts with POLB. Mg(2+) is required as a cofactor. In terms of tissue distribution, the alpha isoform is expressed in all tissues, while the beta isoform is expressed only in the testis.

The protein localises to the nucleus. The catalysed reaction is ATP + (deoxyribonucleotide)n-3'-hydroxyl + 5'-phospho-(deoxyribonucleotide)m = (deoxyribonucleotide)n+m + AMP + diphosphate.. Its function is as follows. The alpha isoform interacts with DNA-repair protein XRCC1 and can correct defective DNA strand-break repair and sister chromatid exchange following treatment with ionizing radiation and alkylating agents. The beta isoform does not interact with XRCC1 and may be specifically involved in the completion of homologous recombination events that occur during meiotic prophase. The polypeptide is DNA ligase 3 (Lig3) (Mus musculus (Mouse)).